The following is a 553-amino-acid chain: Urocanate hydratase (553 aa).

NAD(+) contacts are provided by residues 45 to 46, glutamine 123, 169 to 171, aspartate 189, arginine 194, 235 to 236, 256 to 260, 266 to 267, tyrosine 315, and glycine 485; these read GG, GMG, NA, QTSAH, and YV.

It belongs to the urocanase family. It depends on NAD(+) as a cofactor.

The protein resides in the cytoplasm. The enzyme catalyses 4-imidazolone-5-propanoate = trans-urocanate + H2O. It participates in amino-acid degradation; L-histidine degradation into L-glutamate; N-formimidoyl-L-glutamate from L-histidine: step 2/3. In terms of biological role, catalyzes the conversion of urocanate to 4-imidazolone-5-propionate. This is Urocanate hydratase from Staphylococcus aureus (strain Mu50 / ATCC 700699).